The following is a 358-amino-acid chain: Photosystem II protein D1 2 (358 aa).

The next 3 helical transmembrane spans lie at 28–45, 117–132, and 141–155; these read YVGWFGVLMIPCLLAATT, HFLIGISAYMGRQWEL, and WICVAYSAPLSAAFA. His-117 contacts chlorophyll a. Tyr-125 lines the pheophytin a pocket. Residues Asp-169 and Glu-188 each coordinate [CaMn4O5] cluster. Residues 196-217 form a helical membrane-spanning segment; it reads FHMLGVAGVFGGSLFSAMHGSL. Residue His-197 participates in chlorophyll a binding. A quinone-binding positions include His-214 and 263 to 264; that span reads SF. Residue His-214 coordinates Fe cation. His-271 is a binding site for Fe cation. A helical membrane pass occupies residues 273–287; it reads FLAAWPVVGIWFTSM. [CaMn4O5] cluster is bound by residues His-331, Glu-332, Asp-341, and Ala-343. Positions 344–358 are excised as a propeptide; the sequence is ATESTPVALQAPTIG.

It belongs to the reaction center PufL/M/PsbA/D family. PSII is composed of 1 copy each of membrane proteins PsbA, PsbB, PsbC, PsbD, PsbE, PsbF, PsbH, PsbI, PsbJ, PsbK, PsbL, PsbM, PsbT, PsbX, PsbY, PsbZ, Psb30/Ycf12, peripheral proteins PsbO, CyanoQ (PsbQ), PsbU, PsbV and a large number of cofactors. It forms dimeric complexes. The D1/D2 heterodimer binds P680, chlorophylls that are the primary electron donor of PSII, and subsequent electron acceptors. It shares a non-heme iron and each subunit binds pheophytin, quinone, additional chlorophylls, carotenoids and lipids. D1 provides most of the ligands for the Mn4-Ca-O5 cluster of the oxygen-evolving complex (OEC). There is also a Cl(-1) ion associated with D1 and D2, which is required for oxygen evolution. The PSII complex binds additional chlorophylls, carotenoids and specific lipids. serves as cofactor. Tyr-160 forms a radical intermediate that is referred to as redox-active TyrZ, YZ or Y-Z. Post-translationally, C-terminally processed by CtpA; processing is essential to allow assembly of the oxygen-evolving complex and thus photosynthetic growth.

The protein resides in the cellular thylakoid membrane. The catalysed reaction is 2 a plastoquinone + 4 hnu + 2 H2O = 2 a plastoquinol + O2. Functionally, photosystem II (PSII) is a light-driven water:plastoquinone oxidoreductase that uses light energy to abstract electrons from H(2)O, generating O(2) and a proton gradient subsequently used for ATP formation. It consists of a core antenna complex that captures photons, and an electron transfer chain that converts photonic excitation into a charge separation. The D1/D2 (PsbA/PsbD) reaction center heterodimer binds P680, the primary electron donor of PSII as well as several subsequent electron acceptors. This Synechococcus sp. (strain WH7803) protein is Photosystem II protein D1 2.